The chain runs to 465 residues: Monocarboxylate transporter 4 (465 aa).

The Cytoplasmic portion of the chain corresponds to 2–17; that stretch reads GGAVVDEGPTGVKAPD. A helical transmembrane segment spans residues 18 to 38; sequence GGWGWAVLFGCFVITGFSYAF. Residues 39–61 are Extracellular-facing; that stretch reads PKAVSVFFKELIQEFGIGYSDTA. Residues 62 to 82 traverse the membrane as a helical segment; the sequence is WISSILLAMLYGTGPLCSVCV. The Cytoplasmic portion of the chain corresponds to 83-84; sequence NR. The chain crosses the membrane as a helical span at residues 85–105; sequence FGCRPVMLVGGLFASLGMVAA. At 106-109 the chain is on the extracellular side; that stretch reads SFCR. Residues 110–130 traverse the membrane as a helical segment; it reads SIIQVYLTTGVITGLGLALNF. The Cytoplasmic portion of the chain corresponds to 131–149; that stretch reads QPSLIMLNRYFSKRRPMAN. Residues 150–170 traverse the membrane as a helical segment; that stretch reads GLAAAGSPVFLCALSPLGQLL. Residues 171 to 179 are Extracellular-facing; sequence QDRYGWRGG. Residues 180 to 200 form a helical membrane-spanning segment; that stretch reads FLILGGLLLNCCVCAALMRPL. Residues 201–227 lie on the Cytoplasmic side of the membrane; the sequence is VVTAQPGSGPPRPSRRLLDLSVFRDRG. Residues 228 to 248 form a helical membrane-spanning segment; sequence FVLYAVAASVMVLGLFVPPVF. The Extracellular portion of the chain corresponds to 249–264; it reads VVSYAKDLGVPDTKAA. The chain crosses the membrane as a helical span at residues 265 to 285; that stretch reads FLLTILGFIDIFARPAAGFVA. Topologically, residues 286-294 are cytoplasmic; that stretch reads GLGKVRPYS. The chain crosses the membrane as a helical span at residues 295-315; it reads VYLFSFSMFFNGLADLAGSTA. Over 316-317 the chain is Extracellular; it reads GD. Residues 318 to 338 traverse the membrane as a helical segment; that stretch reads YGGLVVFCIFFGISYGMVGAL. Residues 339 to 351 are Cytoplasmic-facing; sequence QFEVLMAIVGTHK. Residues 352-372 traverse the membrane as a helical segment; it reads FSSAIGLVLLMEAVAVLVGPP. At 373 to 384 the chain is on the extracellular side; sequence SGGKLLDATHVY. A helical transmembrane segment spans residues 385 to 405; it reads MYVFILAGAEVLTSSLILLLG. Residues 406–465 are Cytoplasmic-facing; sequence NFFCIRKKPKEPQPEVAAAEEEKLHKPPADSGVDLREVEHFLKAEPEKNGEVVHTPETSV. Positions 419–438 are disordered; sequence PEVAAAEEEKLHKPPADSGV. Basolateral sorting signal regions lie at residues 423–441 and 441–465; these read AAEE…VDLR and REVE…ETSV. The segment covering 425-438 has biased composition (basic and acidic residues); sequence EEEKLHKPPADSGV. The residue at position 436 (S436) is a Phosphoserine. Residue T460 is modified to Phosphothreonine. S464 carries the phosphoserine modification.

This sequence belongs to the major facilitator superfamily. Monocarboxylate porter (TC 2.A.1.13) family. In terms of assembly, interacts with BSG; interaction mediates SLC16A3 targeting to the plasma membrane. In terms of tissue distribution, highly expressed in skeletal muscle.

It is found in the cell membrane. The protein localises to the basolateral cell membrane. The enzyme catalyses (S)-lactate(in) + H(+)(in) = (S)-lactate(out) + H(+)(out). It carries out the reaction pyruvate(out) + H(+)(out) = pyruvate(in) + H(+)(in). Its function is as follows. Proton-dependent transporter of monocarboxylates such as L-lactate and pyruvate. Plays a predominant role in L-lactate efflux from highly glycolytic cells. The sequence is that of Monocarboxylate transporter 4 (SLC16A3) from Homo sapiens (Human).